Reading from the N-terminus, the 48-residue chain is Small, acid-soluble spore protein N (48 aa).

The interval 1–48 (MGINKKDGQPQYAPSHLGTKPVKYKRNKGEKFHDKSNGHPIVMQTKGE) is disordered. The segment covering 27–37 (NKGEKFHDKSN) has biased composition (basic and acidic residues).

This sequence belongs to the SspN family.

The protein resides in the spore core. The chain is Small, acid-soluble spore protein N from Bacillus velezensis (strain DSM 23117 / BGSC 10A6 / LMG 26770 / FZB42) (Bacillus amyloliquefaciens subsp. plantarum).